Reading from the N-terminus, the 777-residue chain is Zinc finger protein 786 (777 aa).

Residues 9–80 (LTFEDVAIYF…WGEKKKPDKE (72 aa)) form the KRAB domain. The C2H2-type 1; degenerate zinc finger occupies 194-216 (NSCPVCRENSWEKNHLVKQQKGH). Residues 240–262 (ISCLGCGKSFRLKQYLVRHLDIH) form a C2H2-type 2 zinc finger. The C2H2-type 3; degenerate zinc finger occupies 268-291 (PQCPKCKMCFHHERTLFSHHLKNS). The C2H2-type 4; degenerate zinc-finger motif lies at 420–442 (VFCRKCGQGFTKHCGLTEHTRIL). 11 consecutive C2H2-type zinc fingers follow at residues 448 to 470 (FWCAQCGRNFSQKGQLLRHQRLH), 476 to 498 (FQCTMCELRFHLKSRLRAHQLQH), 504 to 526 (FSCSECGRAFTHQCKLREHLRVH), 532 to 554 (FQCPECHKSFRLKGVLKAHQRIH), 560 to 582 (FSCGECGKGFIRQSKLTEHFRVH), 588 to 610 (FQCPECDRRFRLKGQLLSHQRLH), 616 to 638 (FQCPECGKSYRVKADMKAHQLLH), 644 to 665 (FSCQCGKGFAKQSKLVEHMRTH), 671 to 693 (FQCPKCDKSFRLKAQLLSHQGLH), 699 to 721 (FHCPECDKNFREKGHMLRHQRIH), and 727 to 749 (FACGDCGKGFIYKSKLAEHIRVH).

This sequence belongs to the krueppel C2H2-type zinc-finger protein family.

The protein localises to the nucleus. Functionally, may be involved in transcriptional regulation. The sequence is that of Zinc finger protein 786 (Znf786) from Mus musculus (Mouse).